A 559-amino-acid polypeptide reads, in one-letter code: MVSKLTSLQQELLSALLSSGVTKEVLVQALEELLPSPSFGVKLETLPLSPGSGTEPDTKPVFHTLTNGHAKGRLSGDEGSEDGDDYDTPPILKELQALNTEEAADDGAEVDRMLSEDPWRAAKMIKGYMQQHNIPQREVVDVTGLNQSHLSQHLNKGTPMKTQKRAALYTWYVRKQREILRQFNQTVQSSGNLTDKSSQDQLLFLFPEFSQQSQGPGQSDDACSEPTNKKMRRNRFKWGPASQQILYQAYDRQKNPSKEEREALVEECNRAECLQRGVSPSKAHGLGSNLVTEVRVYNWFANRRKEEEAFRQKLAMDAYSSNQTHSLNTLLSHSSPHHQPSTSPPNKLPGVRYNQQGNNEVTSSSTISHHGNSAMVTSQSVLQQVSPASLDPGHNLLSPDGKMQISVSGGGLPPVSTLTNIHSLSHHNPQQSQNLIMTPLSGVMAIAQSLNSSQAQSVPVINSVAGSLAALQPVQFSQQLHSPHQQPLMQQSPGSHMAQQPFMAAVTQLQNSHMYTHKQEPPQYSHTSRFPPAMVVTDTSSISTLTNMSSSKQCPLQAW.

The dimerization stretch occupies residues 1–31; that stretch reads MVSKLTSLQQELLSALLSSGVTKEVLVQALE. Residues 1 to 32 form the HNF-p1 domain; the sequence is MVSKLTSLQQELLSALLSSGVTKEVLVQALEE. A phosphoserine mark is found at S49, S52, S75, and S80. In terms of domain architecture, POU-specific atypical spans 93–188; that stretch reads KELQALNTEE…ILRQFNQTVQ (96 aa). A DNA-binding region (homeobox; HNF1-type) is located at residues 231-312; sequence MRRNRFKWGP…RRKEEEAFRQ (82 aa). Over residues 328–341 the composition is skewed to low complexity; the sequence is NTLLSHSSPHHQPS. The segment at 328–371 is disordered; the sequence is NTLLSHSSPHHQPSTSPPNKLPGVRYNQQGNNEVTSSSTISHHG. Polar residues predominate over residues 353–371; it reads YNQQGNNEVTSSSTISHHG.

This sequence belongs to the HNF1 homeobox family. Binds DNA as a dimer. Can form homodimer or heterodimer with HNF1-alpha. Interacts (via HNF-p1 domain) with PCBD1; the interaction increases its transactivation activity.

Its subcellular location is the nucleus. Functionally, transcription factor that binds to the inverted palindrome 5'-GTTAATNATTAAC-3'. Binds to the FPC element in the cAMP regulatory unit of the PLAU gene. Transcriptional activity is increased by coactivator PCBD1. This Sus scrofa (Pig) protein is Hepatocyte nuclear factor 1-beta (HNF1B).